Here is a 475-residue protein sequence, read N- to C-terminus: Protein ABCI7, chloroplastic (475 aa).

The transit peptide at 1–36 (MAAATVLGRLSLIPNLSSKPKLKSNRRTTSTSVSVR) directs the protein to the chloroplast.

Interacts with NAP7.

It is found in the plastid. The protein resides in the chloroplast. This Arabidopsis thaliana (Mouse-ear cress) protein is Protein ABCI7, chloroplastic (ABCI7).